Here is a 256-residue protein sequence, read N- to C-terminus: Deoxyribose-phosphate aldolase (256 aa).

Aspartate 102 (proton donor/acceptor) is an active-site residue. The active-site Schiff-base intermediate with acetaldehyde is lysine 165. Lysine 197 (proton donor/acceptor) is an active-site residue.

This sequence belongs to the DeoC/FbaB aldolase family. DeoC type 2 subfamily.

Its subcellular location is the cytoplasm. The enzyme catalyses 2-deoxy-D-ribose 5-phosphate = D-glyceraldehyde 3-phosphate + acetaldehyde. It participates in carbohydrate degradation; 2-deoxy-D-ribose 1-phosphate degradation; D-glyceraldehyde 3-phosphate and acetaldehyde from 2-deoxy-alpha-D-ribose 1-phosphate: step 2/2. In terms of biological role, catalyzes a reversible aldol reaction between acetaldehyde and D-glyceraldehyde 3-phosphate to generate 2-deoxy-D-ribose 5-phosphate. The protein is Deoxyribose-phosphate aldolase of Shewanella baltica (strain OS155 / ATCC BAA-1091).